The primary structure comprises 1384 residues: DNA-directed RNA polymerase subunit beta' (1384 aa).

Zn(2+) is bound by residues cysteine 81, cysteine 83, cysteine 96, and cysteine 99. The Mg(2+) site is built by aspartate 472, aspartate 474, and aspartate 476.

The protein belongs to the RNA polymerase beta' chain family. The RNAP catalytic core consists of 2 alpha, 1 beta, 1 beta' and 1 omega subunit. When a sigma factor is associated with the core the holoenzyme is formed, which can initiate transcription. Requires Mg(2+) as cofactor. The cofactor is Zn(2+).

It carries out the reaction RNA(n) + a ribonucleoside 5'-triphosphate = RNA(n+1) + diphosphate. In terms of biological role, DNA-dependent RNA polymerase catalyzes the transcription of DNA into RNA using the four ribonucleoside triphosphates as substrates. This chain is DNA-directed RNA polymerase subunit beta', found in Opitutus terrae (strain DSM 11246 / JCM 15787 / PB90-1).